Here is a 476-residue protein sequence, read N- to C-terminus: Exodeoxyribonuclease 7 large subunit (476 aa).

The protein belongs to the XseA family. In terms of assembly, heterooligomer composed of large and small subunits.

The protein localises to the cytoplasm. It carries out the reaction Exonucleolytic cleavage in either 5'- to 3'- or 3'- to 5'-direction to yield nucleoside 5'-phosphates.. Bidirectionally degrades single-stranded DNA into large acid-insoluble oligonucleotides, which are then degraded further into small acid-soluble oligonucleotides. The polypeptide is Exodeoxyribonuclease 7 large subunit (Bartonella bacilliformis (strain ATCC 35685 / KC583 / Herrer 020/F12,63)).